Here is a 467-residue protein sequence, read N- to C-terminus: Glutamate--tRNA ligase 2 (467 aa).

Residues 18 to 28 (PSPTGYLHVGG) carry the 'HIGH' region motif. A 'KMSKS' region motif is present at residues 238–242 (PLSKR). ATP is bound at residue lysine 241.

It belongs to the class-I aminoacyl-tRNA synthetase family. Glutamate--tRNA ligase type 1 subfamily. In terms of assembly, monomer.

The protein localises to the cytoplasm. It carries out the reaction tRNA(Glu) + L-glutamate + ATP = L-glutamyl-tRNA(Glu) + AMP + diphosphate. In terms of biological role, catalyzes the attachment of glutamate to tRNA(Glu) in a two-step reaction: glutamate is first activated by ATP to form Glu-AMP and then transferred to the acceptor end of tRNA(Glu). This Fervidobacterium nodosum (strain ATCC 35602 / DSM 5306 / Rt17-B1) protein is Glutamate--tRNA ligase 2.